Consider the following 371-residue polypeptide: MLNEFIAIRRELHQIPETGYKELKTQAYLLDYISKLPSEHLEVKKWRTGILVLVKGTNPEKTIGYRTDIDALPITEETGLPFASKHPGNMHACGHDLHMSIALGVLTHFASKPAKDNLLFVFQPAEEGPGGAKPIMESAEFAEWRPDSIYGLHIAPEYKVGEIAIKPGLLFANTSELFISFKGKGGHAAYPHLANDMVVAASAFVGQMQTIISRNIDPMDSAVITIGRIHGGEIQNVIAETAYLDGTIRTLSPETMEIVWTRLKQLAKGWEEAYQCEVEFHPGSDYYQVDNDPVETEAFIHFLEEQYPESYVPARSAMTGEDFGYFLSEIKGFMFWLGVDSEYSLHHAKLSPKEEAIPFAIDVLIHFLESK.

Residue Asp-68 is part of the active site. Glu-127 acts as the Proton acceptor in catalysis.

It belongs to the peptidase M20A family. N-acetyldiaminopimelate deacetylase subfamily.

It catalyses the reaction N-acetyl-(2S,6S)-2,6-diaminopimelate + H2O = (2S,6S)-2,6-diaminopimelate + acetate. It participates in amino-acid biosynthesis; L-lysine biosynthesis via DAP pathway; LL-2,6-diaminopimelate from (S)-tetrahydrodipicolinate (acetylase route): step 3/3. In terms of biological role, catalyzes the conversion of N-acetyl-diaminopimelate to diaminopimelate and acetate. The polypeptide is N-acetyldiaminopimelate deacetylase (Listeria monocytogenes serotype 4b (strain CLIP80459)).